A 241-amino-acid chain; its full sequence is Cell division cycle-associated protein 4 (241 aa).

The SERTA domain maps to 30 to 77 (YSLQRQSLLDMSLVKLQLCHMLVEPNLCRSVLIANTVRQIQEEMTQDG).

Highest levels of expression in the pancreas, thymus, testis, spleen, liver, placenta and leukocytes. Relatively low levels in the lung, kidney, prostate, ovary, small intestine and colon. Hardly detectable, if at all, in the brain, skeletal muscle and heart.

The protein resides in the nucleus. Its function is as follows. May participate in the regulation of cell proliferation through the E2F/RB pathway. May be involved in molecular regulation of hematopoietic stem cells and progenitor cell lineage commitment and differentiation. In Homo sapiens (Human), this protein is Cell division cycle-associated protein 4 (CDCA4).